Consider the following 119-residue polypeptide: Holo-[acyl-carrier-protein] synthase (119 aa).

Positions 8 and 53 each coordinate Mg(2+).

The protein belongs to the P-Pant transferase superfamily. AcpS family. It depends on Mg(2+) as a cofactor.

It is found in the cytoplasm. The enzyme catalyses apo-[ACP] + CoA = holo-[ACP] + adenosine 3',5'-bisphosphate + H(+). Functionally, transfers the 4'-phosphopantetheine moiety from coenzyme A to a Ser of acyl-carrier-protein. The sequence is that of Holo-[acyl-carrier-protein] synthase from Petrotoga mobilis (strain DSM 10674 / SJ95).